The following is a 231-amino-acid chain: Fibrillarin-like rRNA/tRNA 2'-O-methyltransferase (231 aa).

S-adenosyl-L-methionine is bound by residues 88–89, 106–107, 131–132, and 151–154; these read TT, EF, DA, and DVAQ.

This sequence belongs to the methyltransferase superfamily. Fibrillarin family. Interacts with nop5. Component of box C/D small ribonucleoprotein (sRNP) particles that contain rpl7ae, FlpA and nop5, plus a guide RNA.

Involved in pre-rRNA and tRNA processing. Utilizes the methyl donor S-adenosyl-L-methionine to catalyze the site-specific 2'-hydroxyl methylation of ribose moieties in rRNA and tRNA. Site specificity is provided by a guide RNA that base pairs with the substrate. Methylation occurs at a characteristic distance from the sequence involved in base pairing with the guide RNA. This chain is Fibrillarin-like rRNA/tRNA 2'-O-methyltransferase, found in Methanococcus aeolicus (strain ATCC BAA-1280 / DSM 17508 / OCM 812 / Nankai-3).